Consider the following 149-residue polypeptide: Large ribosomal subunit protein bL9 (149 aa).

Lysine 89 carries the N6-acetyllysine modification.

Belongs to the bacterial ribosomal protein bL9 family.

Binds to the 23S rRNA. This is Large ribosomal subunit protein bL9 from Shigella dysenteriae serotype 1 (strain Sd197).